Reading from the N-terminus, the 480-residue chain is MVRRIASATPMVQSPMSPLGTTYCVRPNSVSMNLQRRPLVIASTDEAKVTIIYAGLLIPGDGEPLRNAALVISDKIIAFVGSEADIPKKYLRSTQSTHRVPVLMPGLWDCHMHFGGDDDYYNDYTSGLATHPASSGARLARGCWEALQNGYTSYRDLAGYGCEVAKAINDGTIVGPNVYSSGAALSQTAGHGDIFALPAGEVLGSYGVMNPRPGYWGAGPLCIADGVEEVRRAVRLQIRRGAKVIKVMASGGVMSRDDNPNFAQFSPEELKVIVEEAARQNRIVSAHVHGKAGIMAAIKAGCKSLEHVSYADEEVWELMKEKGILYVATRSVIEIFLASNGEGLVKESWAKLQALADSHLKAYQGAIKAGVTIALGTDTAPGGPTALELQFAVERGGMTPLEAIKAATANAPLSVGPQAPLTGQLREGYEADVIALEENPLEDIKVFQEPKAVTHVWKGGKLFKGPGIGPWGEDARNPFL.

5 residues coordinate Zn(2+): His111, His113, Lys246, His287, and His307. Lys246 is an active-site residue. Residue Asp378 is part of the active site.

The protein belongs to the metallo-dependent hydrolases superfamily. Ochratoxinase amidase 2 family. Homooctamer. Zn(2+) serves as cofactor.

The protein localises to the secreted. The enzyme catalyses ochratoxin A + H2O = ochratoxin alpha + L-phenylalanine. The Zn(2+)-specific chelator 1,10-phenanthroline inhibits the enzyme activity. Functionally, carboxypeptidase that catalyzes the release of a C-terminal amino acid with specific catalytic activity for aromatic amino acids such as phenylalanine. Is able to degrade ochratoxin A, one of the five major mycotoxins most harmful to humans and animals that is produced by Aspergillus and Penicillium species and occurs in a wide range of agricultural products. This is Ochratoxinase from Aspergillus niger (strain ATCC 1015 / CBS 113.46 / FGSC A1144 / LSHB Ac4 / NCTC 3858a / NRRL 328 / USDA 3528.7).